The sequence spans 852 residues: Disease resistance RPP13-like protein 4 (852 aa).

Residues Leu17–Leu68 adopt a coiled-coil conformation. ADP is bound by residues Arg149, Val161, Gly189–Thr196, Arg297, and Lys363. The NB-ARC domain maps to Glu164–Glu410. 6 LRR repeats span residues Cys558–Glu581, Leu585–Leu609, Phe633–Leu657, Leu683–Ser706, Leu763–Asn786, and Leu798–Asn824.

Belongs to the disease resistance NB-LRR family. RPP13 subfamily. As to quaternary structure, interacts with ZED1/ZRK5. Component of a stable high-order oligomeric complex made of RKS1 and RPP13L4/ZAR1 which recruits ZED1-related kinases (e.g. uridylylated PBL2 and acetylated ZED1/ZRK5) in the presence of ATP and pathogenic bacteria type III secreted effector (T3SE) proteins (e.g. Pseudomonas syringae HopZ1a and HopF2a and Xanthomonas campestris pv. campestris (Xcc) XopAC/AvrAC) to form a wheel-like pentameric resistosome; this complex triggers immunity toward pathogenic bacteria (e.g. X.campestris and P.syringae), especially in vascular tissues. Interacts with RKS1, ZED1/ZRK5, ZRK3, ZRK6 and ZRK15.

The protein localises to the cell membrane. It is found in the nucleus. Exhibits autoinhibition activity. CC-NB-LRR receptor-like protein required for recognition of pathogenic bacteria type III effectors (T3E) such as Pseudomonas syringae HopZ1a and HopF2a and Xanthomonas campestris pv. campestris (Xcc) XopAC/AvrAC; this recognition requires ZED1-related kinases (e.g. PBL2, ZRK3 and ZED1/ZRK5). Confers allele-specific recognition and virulence attenuation of HopZ1a. Immunity mediated by RPP13L4/ZAR1 is independent of several genes required by other resistance protein signaling pathways such as NDR1 and RAR1. Together with ZED1/ZRK5, involved in the regulation of the ambient temperature-sensitive intersection of growth and immune response in the absence of pathogens. The sequence is that of Disease resistance RPP13-like protein 4 (RPP13L4) from Arabidopsis thaliana (Mouse-ear cress).